The sequence spans 910 residues: Bifunctional glucose-6-phosphate 1-dehydrogenase/6-phosphogluconolactonase (910 aa).

The tract at residues 1–170 (MDYENFVKSA…DFHIASLFPN (170 aa)) is 6-phosphogluconolactonase. The tract at residues 171–276 (IFYNIYMNNY…PATYLIDTSC (106 aa)) is linker. A glucose-6-phosphate 1-dehydrogenase region spans residues 277 to 910 (TNENVNINNN…FYEDDLLDIN (634 aa)). Residues 345 to 352 (GCSGDLAK), arginine 379, and lysine 548 each bind NADP(+). D-glucose 6-phosphate-binding positions include lysine 548, 578–582 (HYLGK), glutamate 616, and aspartate 635. Histidine 640 (proton acceptor) is an active-site residue. A disordered region spans residues 689–711 (ENFKEDENNDDESKKNHSYHDDP). Lysine 742 is an NADP(+) binding site. D-glucose 6-phosphate is bound at residue lysine 745. Arginine 755 is an NADP(+) binding site. Glutamine 779 is a binding site for D-glucose 6-phosphate. 785–787 (YLK) is a binding site for NADP(+).

It in the N-terminal section; belongs to the glucosamine/galactosamine-6-phosphate isomerase family. 6-phosphogluconolactonase subfamily. This sequence in the C-terminal section; belongs to the glucose-6-phosphate dehydrogenase family. As to quaternary structure, homotetramer.

It catalyses the reaction 6-phospho-D-glucono-1,5-lactone + H2O = 6-phospho-D-gluconate + H(+). The catalysed reaction is D-glucose 6-phosphate + NADP(+) = 6-phospho-D-glucono-1,5-lactone + NADPH + H(+). Its pathway is carbohydrate degradation; pentose phosphate pathway; D-ribulose 5-phosphate from D-glucose 6-phosphate (oxidative stage): step 1/3. The protein operates within carbohydrate degradation; pentose phosphate pathway; D-ribulose 5-phosphate from D-glucose 6-phosphate (oxidative stage): step 2/3. G6PD activity is inhibited by glucosamine-6-phosphate, NADPH, and 4-(4-bromophenyl)-7-(3,4-dimethoxyphenyl)-4,6,7,8-tetrahydroquinoline-2,5(1 H,3H)-dione. G6PD and 6PGL activities can be reversibly inhibited by S-glutathionylation (in vitro). Functionally, bifunctional enzyme which catalyzes the first two steps of the oxidative pentose-phosphate pathway, which represents a route for the dissimilation of carbohydrates besides glycolysis. The main function of this enzyme is to provide reducing power (NADPH) and pentose phosphates for fatty acid and nucleic acid synthesis. The chain is Bifunctional glucose-6-phosphate 1-dehydrogenase/6-phosphogluconolactonase from Plasmodium falciparum (isolate 3D7).